Reading from the N-terminus, the 373-residue chain is XK-related protein 9 (373 aa).

Helical transmembrane passes span 8 to 28, 38 to 58, 166 to 186, 206 to 226, 230 to 250, 256 to 276, 295 to 315, and 318 to 338; these read FMMSVLGIIIYVTDLVADIVL, YVLGVLTLSFVLCGTLIVHCF, MVIMVSCCAISWSTVDYQIAL, LFYKLLTLLSWMLSVVLLLFV, VALLLLLFLWITGFIWAFINH, SVSMEFLYRIVVGFILVFTFF, VLGTLGILTVFWIYPLSIFNS, and FIPISATIVLALLLGIIFLGV.

The protein belongs to the XK family. Post-translationally, undergoes proteolytic processing by caspase-3 (CASP3), caspase-6 (CASP6) and caspase-7 (CASP7) to generate the XK-related protein 9, processed form, leading to its activation. As to expression, highly expressed in the small intestines; weakly expressed in the pancreas, liver, stomach, and large intestines.

It is found in the cell membrane. The catalysed reaction is a 1,2-diacyl-sn-glycero-3-phospho-L-serine(in) = a 1,2-diacyl-sn-glycero-3-phospho-L-serine(out). Its activity is regulated as follows. Activated upon caspase cleavage to generate the XK-related protein 9, processed form. Does not act prior the onset of apoptosis. Phospholipid scramblase that promotes phosphatidylserine exposure on apoptotic cell surface. Phosphatidylserine is a specific marker only present at the surface of apoptotic cells and acts as a specific signal for engulfment. This is XK-related protein 9 from Mus musculus (Mouse).